The following is a 431-amino-acid chain: Glucose-1-phosphate adenylyltransferase (431 aa).

Residues Tyr108, Gly174, 189–190, and Ser207 contribute to the alpha-D-glucose 1-phosphate site; that span reads EK.

The protein belongs to the bacterial/plant glucose-1-phosphate adenylyltransferase family. As to quaternary structure, homotetramer.

The enzyme catalyses alpha-D-glucose 1-phosphate + ATP + H(+) = ADP-alpha-D-glucose + diphosphate. Its pathway is glycan biosynthesis; glycogen biosynthesis. Its function is as follows. Involved in the biosynthesis of ADP-glucose, a building block required for the elongation reactions to produce glycogen. Catalyzes the reaction between ATP and alpha-D-glucose 1-phosphate (G1P) to produce pyrophosphate and ADP-Glc. In Actinobacillus succinogenes (strain ATCC 55618 / DSM 22257 / CCUG 43843 / 130Z), this protein is Glucose-1-phosphate adenylyltransferase.